Consider the following 144-residue polypeptide: Maximins z/Hv (144 aa).

The signal sequence occupies residues 1–18; sequence MNFKYIVAVSFLIASGYA. Positions 19-43 are excised as a propeptide; sequence RSEENDVQSLSQREVLEEESLREIR. An Asparagine amide modification is found at N70. Residues 74–123 constitute a propeptide that is removed on maturation; it reads TAEDHEVMKRLKAVMRDLDSLDHPEEASERETRGFNQEEIANLFTKKEKR. At I143 the chain carries Isoleucine amide.

This sequence belongs to the bombinin family. Expressed by the skin glands.

It is found in the secreted. Its function is as follows. Maximin-z shows antimicrobial activity against bacteria and against the fungus C.albicans. It has little hemolytic activity. In terms of biological role, maximin-Hv shows antimicrobial activity against bacteria and against the fungus C.albicans. Shows strong hemolytic activity. In Bombina maxima (Giant fire-bellied toad), this protein is Maximins z/Hv.